Here is a 146-residue protein sequence, read N- to C-terminus: UPF0178 protein R01393 (146 aa).

Belongs to the UPF0178 family.

This Rhizobium meliloti (strain 1021) (Ensifer meliloti) protein is UPF0178 protein R01393.